We begin with the raw amino-acid sequence, 335 residues long: Glyoxylate reductase (335 aa).

NADP(+)-binding positions include 159 to 162 (MGRI), 181 to 183 (SRS), and 240 to 242 (TGR). Residues R242 and E271 contribute to the active site. The active-site Proton donor is H290. NADP(+) is bound at residue 290 to 292 (HAA).

Belongs to the D-isomer specific 2-hydroxyacid dehydrogenase family. GyaR subfamily. Homodimer.

The protein resides in the cytoplasm. The catalysed reaction is glycolate + NAD(+) = glyoxylate + NADH + H(+). The polypeptide is Glyoxylate reductase (Aeropyrum pernix (strain ATCC 700893 / DSM 11879 / JCM 9820 / NBRC 100138 / K1)).